A 418-amino-acid polypeptide reads, in one-letter code: Cyclin-A1 (418 aa).

The protein belongs to the cyclin family. Cyclin AB subfamily. As to quaternary structure, interacts with the CDK1 and the CDK2 protein kinases to form a serine/threonine kinase holoenzyme complex. The cyclin subunit imparts substrate specificity to the complex.

It localises to the nucleus. Its function is as follows. May be involved in the control of the cell cycle at the G1/S (start) and G2/M (mitosis) transitions. The chain is Cyclin-A1 (ccna1) from Xenopus laevis (African clawed frog).